A 297-amino-acid chain; its full sequence is Homoserine kinase (297 aa).

82–92 (PLTRGLGSSAS) contributes to the ATP binding site.

Belongs to the GHMP kinase family. Homoserine kinase subfamily.

It localises to the cytoplasm. The enzyme catalyses L-homoserine + ATP = O-phospho-L-homoserine + ADP + H(+). Its pathway is amino-acid biosynthesis; L-threonine biosynthesis; L-threonine from L-aspartate: step 4/5. Its function is as follows. Catalyzes the ATP-dependent phosphorylation of L-homoserine to L-homoserine phosphate. This is Homoserine kinase from Bacillus cereus (strain AH187).